A 296-amino-acid polypeptide reads, in one-letter code: Coiled-coil domain-containing protein 69 (296 aa).

Basic residues predominate over residues 1–18 (MGCRHSRLSSCKPPKKKR). The segment at 1-41 (MGCRHSRLSSCKPPKKKRQEPEPEQPPRPEPHELGPLNGDT) is disordered. Glycine 2 carries the N-myristoyl glycine lipid modification. Residues 19 to 33 (QEPEPEQPPRPEPHE) are compositionally biased toward basic and acidic residues. Residues 48-272 (CASEEAERHQ…QEKEELLYRV (225 aa)) are a coiled coil. Phosphoserine occurs at positions 154 and 241.

This sequence belongs to the CCDC69 family. Highly expressed in duodenum, esophagus, pancreas, prostate, salivary gland, thymus and urinary bladder.

Its subcellular location is the cytoplasm. The protein resides in the cytoskeleton. It localises to the spindle. The protein localises to the midbody. Functionally, may act as a scaffold to regulate the recruitment and assembly of spindle midzone components. Required for the localization of AURKB and PLK1 to the spindle midzone. This chain is Coiled-coil domain-containing protein 69, found in Homo sapiens (Human).